The chain runs to 170 residues: Cathelicidin antimicrobial peptide (170 aa).

A signal peptide spans 1–30 (MKTQRDGHSLGGWSLMLLLLGLLMPLAIVA). A propeptide spans 31–131 (QVLSYKEAVL…DISCDKDNRR (101 aa)) (cathelin-like domain (CLD)). Intrachain disulfides connect C86–C97 and C108–C125. Residues 150–162 (FKRIVQRIKDFLQ) form an active core region.

This sequence belongs to the cathelicidin family. In terms of assembly, monomer, homodimer or homotrimer (in vitro). Oligomerizes as tetra- or hexamer in solution (in vitro). Post-translationally, proteolytically cleaved by proteinase PRTN3 into antibacterial peptide LL-37. Proteolytically cleaved by cathepsin CTSG and neutrophil elastase ELANE. Resistant to proteolytic degradation in solution, and when bound to both zwitterionic (mimicking mammalian membranes) and negatively charged membranes (mimicking bacterial membranes). In terms of processing, after secretion onto the skin surface, the CAMP gene product is processed by a serine protease-dependent mechanism into multiple novel antimicrobial peptides distinct from and shorter than cathelicidin LL-37. These peptides show enhanced antimicrobial action, acquiring the ability to kill skin pathogens such as S.aureus, E.coli and C.albicans. These peptides have lost the ability to stimulate CXCL8/IL8 release from keratinocytes. The peptides act synergistically, killing bacteria at lower concentrations when present together, and maintain activity at increased salt condition.

It is found in the secreted. Its subcellular location is the vesicle. Its function is as follows. Antimicrobial protein that is an integral component of the innate immune system. Binds to bacterial lipopolysaccharides (LPS). Acts via neutrophil N-formyl peptide receptors to enhance the release of CXCL2. Postsecretory processing generates multiple cathelicidin antimicrobial peptides with various lengths which act as a topical antimicrobial defense in sweat on skin. The unprocessed precursor form, cathelicidin antimicrobial peptide, inhibits the growth of Gram-negative E.coli and E.aerogenes with efficiencies comparable to that of the mature peptide LL-37 (in vitro). Antimicrobial peptide that is an integral component of the innate immune system. Binds to bacterial lipopolysaccharides (LPS). Causes membrane permeabilization by forming transmembrane pores (in vitro). Causes lysis of E.coli. Exhibits antimicrobial activity against Gram-negative bacteria such as P.aeruginosa, S.typhimurium, E.aerogenes, E.coli and P.syringae, Gram-positive bacteria such as L.monocytogenes, S.epidermidis, S.pyogenes and S.aureus, as well as vancomycin-resistant enterococci (in vitro). Exhibits antimicrobial activity against methicillin-resistant S.aureus, P.mirabilis, and C.albicans in low-salt media, but not in media containing 100 mM NaCl (in vitro). Forms chiral supramolecular assemblies with quinolone signal (PQS) molecules of P.aeruginosa, which may lead to interference of bacterial quorum signaling and perturbance of bacterial biofilm formation. May form supramolecular fiber-like assemblies on bacterial membranes. Induces cytokine and chemokine producation as well as TNF/TNFA and CSF2/GMCSF production in normal human keratinocytes. Exhibits hemolytic activity against red blood cells. Functionally, exhibits antimicrobial activity against E.coli and B.megaterium (in vitro). The sequence is that of Cathelicidin antimicrobial peptide from Hylobates moloch (Silvery gibbon).